Here is a 216-residue protein sequence, read N- to C-terminus: MIF4G domain-containing protein A (216 aa).

One can recognise an MIF4G domain in the interval aspartate 2–glycine 199.

It belongs to the MIF4GD family. As to quaternary structure, interacts with eif4g1, eif4g2 and slbp; probably tethered by SLBP to the 3'-end of mRNAs ending with the histone stem-loop, it also interacts with eif4g1 which is bound to their 5'-end.

It is found in the cytoplasm. Its subcellular location is the nucleus. In terms of biological role, functions in replication-dependent translation of histone mRNAs which differ from other eukaryotic mRNAs in that they do not end with a poly-A tail but a stem-loop. May participate in circularizing those mRNAs specifically enhancing their translation. The polypeptide is MIF4G domain-containing protein A (mif4gda) (Danio rerio (Zebrafish)).